The primary structure comprises 129 residues: MARKTNTRKRRVKKNIESGIAHIRSTFNNTIVMITDTHGNALAWSSAGSLGFKGSRKSTPFAAQMAAESAAKSAQEHGLKTLEVTVKGPGSGREAAIRALQAAGLEVTAIKDVTPVPHNGCRPPKRRRV.

The protein belongs to the universal ribosomal protein uS11 family. As to quaternary structure, part of the 30S ribosomal subunit. Interacts with proteins S7 and S18. Binds to IF-3.

Functionally, located on the platform of the 30S subunit, it bridges several disparate RNA helices of the 16S rRNA. Forms part of the Shine-Dalgarno cleft in the 70S ribosome. In Listeria innocua serovar 6a (strain ATCC BAA-680 / CLIP 11262), this protein is Small ribosomal subunit protein uS11.